Reading from the N-terminus, the 164-residue chain is Cyclic pyranopterin monophosphate synthase (164 aa).

Substrate is bound by residues 77 to 79 (LCH) and 115 to 116 (ME). Residue aspartate 130 is part of the active site.

This sequence belongs to the MoaC family. In terms of assembly, homohexamer; trimer of dimers.

It carries out the reaction (8S)-3',8-cyclo-7,8-dihydroguanosine 5'-triphosphate = cyclic pyranopterin phosphate + diphosphate. Its pathway is cofactor biosynthesis; molybdopterin biosynthesis. Its function is as follows. Catalyzes the conversion of (8S)-3',8-cyclo-7,8-dihydroguanosine 5'-triphosphate to cyclic pyranopterin monophosphate (cPMP). The polypeptide is Cyclic pyranopterin monophosphate synthase (Rhizobium meliloti (strain 1021) (Ensifer meliloti)).